The following is a 113-amino-acid chain: UPF0102 protein Ccon26_01140 (113 aa).

Belongs to the UPF0102 family.

This chain is UPF0102 protein Ccon26_01140, found in Campylobacter concisus (strain 13826).